The primary structure comprises 128 residues: Protein FAM229A (128 aa).

The tract at residues 1–96 is disordered; the sequence is MQSSPSTLGP…VATDQNPVRP (96 aa).

It belongs to the FAM229 family.

In Mus musculus (Mouse), this protein is Protein FAM229A (Fam229a).